A 515-amino-acid polypeptide reads, in one-letter code: ATP synthase subunit alpha (515 aa).

171-178 lines the ATP pocket; sequence GDRQTGKT.

It belongs to the ATPase alpha/beta chains family. As to quaternary structure, F-type ATPases have 2 components, CF(1) - the catalytic core - and CF(0) - the membrane proton channel. CF(1) has five subunits: alpha(3), beta(3), gamma(1), delta(1), epsilon(1). CF(0) has three main subunits: a(1), b(2) and c(9-12). The alpha and beta chains form an alternating ring which encloses part of the gamma chain. CF(1) is attached to CF(0) by a central stalk formed by the gamma and epsilon chains, while a peripheral stalk is formed by the delta and b chains.

It is found in the cell inner membrane. It carries out the reaction ATP + H2O + 4 H(+)(in) = ADP + phosphate + 5 H(+)(out). Functionally, produces ATP from ADP in the presence of a proton gradient across the membrane. The alpha chain is a regulatory subunit. In Xanthomonas campestris pv. campestris (strain 8004), this protein is ATP synthase subunit alpha.